The sequence spans 318 residues: Taste receptor type 2 member 60 (318 aa).

Topologically, residues 1 to 7 (MNGDHMV) are extracellular. A helical membrane pass occupies residues 8–28 (LGSSVTDQKAIILVIILLLLC). Residues 29-40 (LVAIAGNGFITA) lie on the Cytoplasmic side of the membrane. A helical membrane pass occupies residues 41 to 61 (ALGVEWVLRGTLLPCDKLLVS). The Extracellular portion of the chain corresponds to 62–88 (LRASRFCLQWVVMGKTIYVLLYPTAFP). The chain crosses the membrane as a helical span at residues 89 to 109 (YNPVLQFLAFQWDFLNAATLW). At 110 to 128 (FSSWLSVFYCVKIATFTHP) the chain is on the cytoplasmic side. Residues 129–149 (VFLWLKHKLSEWVPWMFFSSV) traverse the membrane as a helical segment. Residues 150-183 (GLSSFTTILFFIGNHSIYQNYLRNHLQPWNVTGN) lie on the Extracellular side of the membrane. 2 N-linked (GlcNAc...) asparagine glycosylation sites follow: asparagine 163 and asparagine 179. A helical transmembrane segment spans residues 184–204 (SIWSYCEKFYLFPVKMITWTM). Residues 205–234 (PTAVFFICMILLITSLGRHMEKALLTTSGF) are Cytoplasmic-facing. A helical membrane pass occupies residues 235–255 (REPSVQAHVKALLALLSLAML). Residues 256-264 (FISYFLSLV) are Extracellular-facing. Residues 265–285 (LSAAGIFPPLDFKFWVGESVI) traverse the membrane as a helical segment. At 286-318 (YLCAGVHPIILLFSNRRLRAVLERCRSSRCRTP) the chain is on the cytoplasmic side.

Belongs to the G-protein coupled receptor T2R family.

It localises to the membrane. Receptor that may play a role in the perception of bitterness and is gustducin-linked. May play a role in sensing the chemical composition of the gastrointestinal content. The activity of this receptor may stimulate alpha gustducin, mediate PLC-beta-2 activation and lead to the gating of TRPM5. This chain is Taste receptor type 2 member 60 (TAS2R60), found in Macaca mulatta (Rhesus macaque).